A 1461-amino-acid polypeptide reads, in one-letter code: Periaxin (1461 aa).

Ser-7 bears the Phosphoserine mark. Residues Leu-16 to Thr-99 enclose the PDZ domain. The Nuclear export signal signature appears at Val-70–Leu-84. The Nuclear localization signal motif lies at Lys-118–Arg-196. At Ser-133 the chain carries Phosphoserine. 55 repeat units span residues Gly-431–Lys-435, Gly-439–Lys-443, Ala-447–Lys-451, Val-455–Ala-459, Val-463–Glu-467, Val-468–Lys-472, Val-473–Lys-477, Val-481–Ala-485, Val-486–Arg-490, Val-494–Lys-498, Val-499–Lys-503, Val-507–Ala-511, Val-512–Arg-516, Val-520–Lys-524, Val-525–Lys-529, Val-533–Ala-537, Val-538–Arg-542, Val-546–Lys-550, Val-551–Lys-555, Val-559–Ala-563, Val-564–Arg-568, Val-572–Lys-576, Val-577–Lys-581, Val-582–Lys-586, Val-590–Lys-594, Leu-595–Lys-599, Leu-600–Gln-604, Val-608–Ala-612, Val-613–His-617, Leu-618–Gln-622, Val-626–Lys-630, Leu-631–Lys-635, Leu-636–Lys-640, Val-644–Ala-648, Val-649–His-653, Leu-654–Gln-658, Val-662–Lys-666, Met-670–Ala-674, Val-675–Arg-679, Val-683–Lys-687, Val-688–Lys-692, Val-696–Ala-700, Val-701–His-705, Leu-706–Gln-710, Val-714–Lys-718, Val-719–Lys-723, Leu-724–Lys-728, Val-732–Ala-736, Val-737–His-741, Leu-742–Gln-746, Val-750–Arg-754, Leu-755–Gln-759, Val-760–Pro-764, Ala-771–Lys-775, and Ala-779–Gln-783. Residues Gly-431 to Gln-783 form a 55 X 5 AA approximate tandem repeats of [LVMAG]-[PSREQC]-[EDKL]-[LIVMAP]-[AQKHRPE]; that may have a tripeptide spacer of [LV]-P-[KER] region. A phosphoserine mark is found at Ser-900 and Ser-1082. Basic and acidic residues predominate over residues Glu-1318 to Lys-1327. Residues Glu-1318–Val-1461 are disordered. 6 positions are modified to phosphoserine: Ser-1349, Ser-1351, Ser-1363, Ser-1401, Ser-1407, and Ser-1439. Residues Pro-1352 to Ser-1363 show a composition bias toward acidic residues.

The protein belongs to the periaxin family. Homodimer (via PDZ domain). Interacts with SCN10A. Found in a complex with SCN10A. Interacts with DRP2. Identified in a dystroglycan complex that contains at least PRX, DRP2, UTRN, DMD and DAG1. Detected in a complex composed of at least EZR, AHNAK, PPL and PRX. Identified in a complex with EZR, AHNAK, BFSP1, BFSP2, ANK2, PLEC, VIM and spectrin. Detected in spinal cord. Isoform 1 and isoform 2 are found in sciatic nerve and Schwann cells.

It localises to the cell membrane. It is found in the nucleus. The protein localises to the cytoplasm. Its subcellular location is the cell junction. Functionally, scaffolding protein that functions as part of a dystroglycan complex in Schwann cells, and as part of EZR and AHNAK-containing complexes in eye lens fiber cells. Required for the maintenance of the peripheral myelin sheath that is essential for normal transmission of nerve impulses and normal perception of sensory stimuli. Required for normal transport of MBP mRNA from the perinuclear to the paranodal regions. Required for normal remyelination after nerve injury. Required for normal elongation of Schwann cells and normal length of the internodes between the nodes of Ranvier. The demyelinated nodes of Ranvier permit saltatory transmission of nerve impulses; shorter internodes cause slower transmission of nerve impulses. Required for the formation of appositions between the abaxonal surface of the myelin sheath and the Schwann cell plasma membrane; the Schwann cell cytoplasm is restricted to regions between these appositions. Required for the formation of Cajal bands and of Schmidt-Lanterman incisures that correspond to short, cytoplasm-filled regions on myelinated nerves. Recruits DRP2 to the Schwann cell plasma membrane. Required for normal protein composition of the eye lens fiber cell plasma membrane and normal eye lens fiber cell morphology. In Homo sapiens (Human), this protein is Periaxin (PRX).